Reading from the N-terminus, the 513-residue chain is Glycogen synthase (513 aa).

Residue K47 coordinates ADP-alpha-D-glucose.

This sequence belongs to the glycosyltransferase 1 family. Bacterial/plant glycogen synthase subfamily.

It catalyses the reaction [(1-&gt;4)-alpha-D-glucosyl](n) + ADP-alpha-D-glucose = [(1-&gt;4)-alpha-D-glucosyl](n+1) + ADP + H(+). It functions in the pathway glycan biosynthesis; glycogen biosynthesis. In terms of biological role, synthesizes alpha-1,4-glucan chains using ADP-glucose. This is Glycogen synthase from Pseudomonas aeruginosa (strain ATCC 15692 / DSM 22644 / CIP 104116 / JCM 14847 / LMG 12228 / 1C / PRS 101 / PAO1).